A 427-amino-acid chain; its full sequence is Flotillin-1 (427 aa).

S19, S163, and S385 each carry phosphoserine. At T387 the chain carries Phosphothreonine.

The protein belongs to the band 7/mec-2 family. Flotillin subfamily. In terms of assembly, heterooligomeric complex of flotillin-1 and flotillin-2 and caveolin-1 and caveolin-2. Interacts with ECPAS.

It is found in the cell membrane. Its subcellular location is the endosome. The protein localises to the membrane. It localises to the caveola. The protein resides in the melanosome. It is found in the membrane raft. May act as a scaffolding protein within caveolar membranes, functionally participating in formation of caveolae or caveolae-like vesicles. The chain is Flotillin-1 (FLOT1) from Sus scrofa (Pig).